The primary structure comprises 113 residues: uncharacterized protein (113 aa).

The region spanning 16 to 70 (LYEYLEPLDLKINELAELLHVHRNSVSALINNNRKLTTEMAFRLAKVFDTTVDFW) is the HTH cro/C1-type domain. The H-T-H motif DNA-binding region spans 27–46 (INELAELLHVHRNSVSALIN).

Belongs to the VapA/VapI family.

This is an uncharacterized protein from Escherichia coli O6:H1 (strain CFT073 / ATCC 700928 / UPEC).